The primary structure comprises 103 residues: UPF0145 protein NT01CX_0170 (103 aa).

It belongs to the UPF0145 family.

This chain is UPF0145 protein NT01CX_0170, found in Clostridium novyi (strain NT).